Consider the following 656-residue polypeptide: Chaperone protein DnaK (656 aa).

Over residues 590 to 605 (GGAAGGAAGGAAGGAA) the composition is skewed to gly residues. The interval 590-656 (GGAAGGAAGG…DGQPKPGPAA (67 aa)) is disordered. Residues 606–621 (GDAAGAAGDSTGDAAG) are compositionally biased toward low complexity. Residues 622–635 (AAGGPSEGPAGDAG) are compositionally biased toward gly residues.

The protein belongs to the heat shock protein 70 family.

Its function is as follows. Acts as a chaperone. The sequence is that of Chaperone protein DnaK from Cenarchaeum symbiosum (strain A).